A 535-amino-acid polypeptide reads, in one-letter code: EH domain-containing protein 3 (535 aa).

Met1 carries the N-acetylmethionine modification. Positions 55–286 (FDNKPMVLLV…DLFKDIQSLP (232 aa)) constitute a Dynamin-type G domain. The G1 motif stretch occupies residues 65–72 (GQYSTGKT). 65–72 (GQYSTGKT) contributes to the ATP binding site. The interval 91–92 (EP) is G2 motif. A G3 motif region spans residues 153–156 (DTPG). Positions 198 to 227 (DEFSEVIKALKNHEDKMRVVLNKADQIETQ) form a coiled coil. The interval 219–222 (NKAD) is G4 motif. Residue Lys220 participates in ATP binding. Ile243 is a region of interest (G5 motif). ATP is bound at residue Trp258. Residue Lys315 forms a Glycyl lysine isopeptide (Lys-Gly) (interchain with G-Cter in SUMO) linkage. Residues Ser349 and Ser456 each carry the phosphoserine modification. One can recognise an EH domain in the interval 444–532 (DKPMYDEIFY…AHLLPPSKRK (89 aa)). The EF-hand domain occupies 476-511 (LPNSVLGKIWKLADIDKDGMLDDEEFALANHLIKVK). Ca(2+) is bound by residues Asp489, Asp491, Asp493, Met495, and Glu500. Lys511 is covalently cross-linked (Glycyl lysine isopeptide (Lys-Gly) (interchain with G-Cter in SUMO)).

It belongs to the TRAFAC class dynamin-like GTPase superfamily. Dynamin/Fzo/YdjA family. EHD subfamily. In terms of assembly, homooligomer, and heterooligomer with EHD1, EHD2 and EHD4, ATP-binding is required for heterooligomerization. Interacts with PACSIN1. Interacts with PACSIN2. Interacts (via EH domain) with MICALL1. Interacts (via EH domain) with RAB11FIP2. Interacts with ANK2. Interacts with CACNA1GG and CACNA1H.

Its subcellular location is the recycling endosome membrane. It localises to the cell membrane. The protein localises to the cell projection. It is found in the cilium membrane. ATP- and membrane-binding protein that controls membrane reorganization/tubulation upon ATP hydrolysis. In vitro causes tubulation of endocytic membranes. Binding to phosphatidic acid induces its membrane tubulation activity. Plays a role in endocytic transport. Involved in early endosome to recycling endosome compartment (ERC), retrograde early endosome to Golgi, and endosome to plasma membrane (rapid recycling) protein transport. Involved in the regulation of Golgi maintenance and morphology. Involved in the recycling of internalized D1 dopamine receptor. Plays a role in cardiac protein trafficking probably implicating ANK2. Involved in the ventricular membrane targeting of SLC8A1 and CACNA1C and probably the atrial membrane localization of CACNA1GG and CACNA1H implicated in the regulation of atrial myocyte excitability and cardiac conduction. In conjunction with EHD4 may be involved in endocytic trafficking of KDR/VEGFR2 implicated in control of glomerular function. Involved in the rapid recycling of integrin beta-3 implicated in cell adhesion maintenance. Involved in the unidirectional retrograde dendritic transport of endocytosed BACE1 and in efficient sorting of BACE1 to axons implicating a function in neuronal APP processing. Plays a role in the formation of the ciliary vesicle, an early step in cilium biogenesis; possibly sharing redundant functions with Ehd1. The polypeptide is EH domain-containing protein 3 (Rattus norvegicus (Rat)).